The chain runs to 3564 residues: CUB and sushi domain-containing protein 1 (3564 aa).

An N-terminal signal peptide occupies residues M1 to G29. Topologically, residues Q30–S3487 are extracellular. Intrachain disulfides connect C32–C58, C145–C185, C171–C202, C208–C234, C349–C389, C375–C406, C411–C437, C527–C567, C553–C580, and C584–C610. The CUB 1 domain maps to C32–L140. N-linked (GlcNAc...) asparagine glycans are attached at residues N40 and N57. The 62-residue stretch at H143–A204 folds into the Sushi 1 domain. The CUB 2 domain occupies C208–K312. Positions D347–A408 constitute a Sushi 2 domain. The CUB 3 domain maps to C411–I522. In terms of domain architecture, Sushi 3 spans G525–F582. The region spanning C584 to F692 is the CUB 4 domain. Residues N587 and N686 are each glycosylated (N-linked (GlcNAc...) asparagine). The 62-residue stretch at N695–A756 folds into the Sushi 4 domain. Disulfide bonds link C697-C738, C723-C754, C758-C784, C873-C913, C899-C926, and C930-C956. The region spanning C758–V866 is the CUB 5 domain. Residues D871–A928 form the Sushi 5 domain. The 111-residue stretch at C930 to Y1040 folds into the CUB 6 domain. N-linked (GlcNAc...) asparagine glycosylation is found at N955, N1015, and N1034. One can recognise a Sushi 6 domain in the interval E1043–A1102. 3 cysteine pairs are disulfide-bonded: C1045-C1085, C1071-C1100, and C1104-C1130. The CUB 7 domain occupies C1104–F1212. N1184 and N1197 each carry an N-linked (GlcNAc...) asparagine glycan. Positions V1215 to A1275 constitute a Sushi 7 domain. Disulfide bonds link C1217–C1258, C1244–C1273, C1277–C1304, C1391–C1431, C1417–C1447, C1451–C1477, C1564–C1604, C1590–C1621, C1625–C1651, C1741–C1781, C1767–C1798, and C1802–C1828. Residues C1277–S1386 form the CUB 8 domain. A Sushi 8 domain is found at S1389–A1449. N-linked (GlcNAc...) asparagine glycosylation is present at N1399. The region spanning C1451 to K1559 is the CUB 9 domain. N-linked (GlcNAc...) asparagine glycosylation is found at N1454 and N1572. In terms of domain architecture, Sushi 9 spans E1562 to A1623. The region spanning C1625–V1733 is the CUB 10 domain. Residue N1644 is glycosylated (N-linked (GlcNAc...) asparagine). Residues T1739 to V1800 form the Sushi 10 domain. Residues N1792, N1805, and N1882 are each glycosylated (N-linked (GlcNAc...) asparagine). The CUB 11 domain occupies C1802–V1910. The region spanning A1913–A1972 is the Sushi 11 domain. 3 disulfides stabilise this stretch: C1915–C1955, C1941–C1970, and C1974–C2000. The CUB 12 domain maps to C1974–Y2082. The N-linked (GlcNAc...) asparagine glycan is linked to N2018. A Sushi 12 domain is found at Q2085 to A2144. Intrachain disulfides connect C2087/C2127, C2113/C2142, and C2146/C2172. A CUB 13 domain is found at C2146–R2257. N-linked (GlcNAc...) asparagine glycans are attached at residues N2149, N2154, and N2187. In terms of domain architecture, Sushi 13 spans K2256–A2317. Intrachain disulfides connect C2258–C2300, C2286–C2315, and C2319–C2347. Positions C2319–P2430 constitute a CUB 14 domain. N-linked (GlcNAc...) asparagine glycans are attached at residues N2358, N2394, N2400, N2445, N2470, and N2503. Sushi domains follow at residues P2430–A2492, V2493–P2554, V2555–V2619, I2620–A2677, G2678–P2735, I2736–V2793, V2794–A2856, I2857–G2914, G2918–A2975, V2976–I3034, I3035–A3094, V3095–P3152, V3153–D3210, T3214–P3272, and H3273–S3332. Intrachain disulfides connect C2432–C2473, C2459–C2490, C2495–C2537, C2521–C2552, C2557–C2602, C2588–C2617, C2622–C2662, C2648–C2675, C2680–C2720, C2706–C2733, C2738–C2778, and C2764–C2791. N-linked (GlcNAc...) asparagine glycosylation occurs at N2605. N2750 and N2761 each carry an N-linked (GlcNAc...) asparagine glycan. N2795 carries N-linked (GlcNAc...) asparagine glycosylation. 18 cysteine pairs are disulfide-bonded: C2796–C2841, C2827–C2854, C2859–C2899, C2885–C2912, C2920–C2960, C2946–C2973, C2978–C3019, C3005–C3032, C3037–C3079, C3063–C3092, C3097–C3137, C3123–C3150, C3155–C3195, C3181–C3208, C3216–C3257, C3243–C3270, C3275–C3317, and C3302–C3330. A glycan (N-linked (GlcNAc...) asparagine) is linked at N2894. N-linked (GlcNAc...) asparagine glycosylation is present at N2963. Residues N3022, N3056, and N3086 are each glycosylated (N-linked (GlcNAc...) asparagine). N-linked (GlcNAc...) asparagine glycosylation is found at N3228 and N3260. N-linked (GlcNAc...) asparagine glycosylation is found at N3339, N3379, and N3386. The chain crosses the membrane as a helical span at residues V3488–L3508. The Cytoplasmic portion of the chain corresponds to Y3509 to V3564.

Belongs to the CSMD family.

The protein localises to the membrane. The chain is CUB and sushi domain-containing protein 1 (Csmd1) from Mus musculus (Mouse).